The chain runs to 239 residues: Methylthioribulose-1-phosphate dehydratase (239 aa).

Cys-94 is a substrate binding site. Residues His-112 and His-114 each coordinate Zn(2+). Residue Glu-136 is the Proton donor/acceptor of the active site. A Zn(2+)-binding site is contributed by His-192.

This sequence belongs to the aldolase class II family. MtnB subfamily. Zn(2+) serves as cofactor.

It localises to the cytoplasm. The enzyme catalyses 5-(methylsulfanyl)-D-ribulose 1-phosphate = 5-methylsulfanyl-2,3-dioxopentyl phosphate + H2O. The protein operates within amino-acid biosynthesis; L-methionine biosynthesis via salvage pathway; L-methionine from S-methyl-5-thio-alpha-D-ribose 1-phosphate: step 2/6. Functionally, catalyzes the dehydration of methylthioribulose-1-phosphate (MTRu-1-P) into 2,3-diketo-5-methylthiopentyl-1-phosphate (DK-MTP-1-P). Functions in the methionine salvage pathway. May play a role in apoptosis. The protein is Methylthioribulose-1-phosphate dehydratase of Aquarana catesbeiana (American bullfrog).